We begin with the raw amino-acid sequence, 495 residues long: MTTATPAKTKYEAIIGLETHCQLNTNSKIFCACSTNFDSPPNTNICPICLGYPGVLPVLNEEVLASAVKLGLAINGKIASYSKFDRKQYFYADLPKNYQISQYDLPIVEHGFLEIELVDKKTKEVTRKTIGITRLHMEEDAGKLVHAGSDRLAGSTHSLVDFNRTGVPLLEIVSEPDLRSGQEAAEYAQELRRLVRYLGISDGNMQEGSLRCDVNISIRPVGQKEFGTKVEIKNMNSFSAIQKAIEYEIERQIEALENNEPIYQETRLWEEKTQCTVSMRKKEGSSDYRYFPEPDLPPLEVSPEQLEHWKHQLPELPAQKRSRYEAEFGLSAYDARVLTDDRDVANYYEAAVAAGADAKLVANWVTQDIAAYLNNNKLAIAEIVLTPQSLGELVQLIETGTISGKIAKEILPELLEKGGSPKELVAKKGMTQISDLGELEKIIDEIIAANPKELEKFRSGKTNLKGFFVGQVMKQTGGRADPKLTNQLVDQKLQG.

The protein belongs to the GatB/GatE family. GatB subfamily. As to quaternary structure, heterotrimer of A, B and C subunits.

It carries out the reaction L-glutamyl-tRNA(Gln) + L-glutamine + ATP + H2O = L-glutaminyl-tRNA(Gln) + L-glutamate + ADP + phosphate + H(+). It catalyses the reaction L-aspartyl-tRNA(Asn) + L-glutamine + ATP + H2O = L-asparaginyl-tRNA(Asn) + L-glutamate + ADP + phosphate + 2 H(+). Functionally, allows the formation of correctly charged Asn-tRNA(Asn) or Gln-tRNA(Gln) through the transamidation of misacylated Asp-tRNA(Asn) or Glu-tRNA(Gln) in organisms which lack either or both of asparaginyl-tRNA or glutaminyl-tRNA synthetases. The reaction takes place in the presence of glutamine and ATP through an activated phospho-Asp-tRNA(Asn) or phospho-Glu-tRNA(Gln). The polypeptide is Aspartyl/glutamyl-tRNA(Asn/Gln) amidotransferase subunit B (Rippkaea orientalis (strain PCC 8801 / RF-1) (Cyanothece sp. (strain PCC 8801))).